The following is a 544-amino-acid chain: Histone-arginine methyltransferase CARMER (544 aa).

Positions 150-459 (ASQYFQFYGY…QSYDVTIDLH (310 aa)) constitute an SAM-dependent MTase PRMT-type domain. 6 residues coordinate S-adenosyl-L-methionine: glutamine 163, arginine 172, glycine 196, glutamate 218, glutamate 247, and threonine 275. Positions 505–520 (DTQQQQQGSRNSNSML) are enriched in polar residues. Residues 505-527 (DTQQQQQGSRNSNSMLNGGLSVN) are disordered. An Asymmetric dimethylarginine; by autocatalysis modification is found at arginine 514.

Belongs to the class I-like SAM-binding methyltransferase superfamily. Protein arginine N-methyltransferase family. As to quaternary structure, homodimer. In terms of processing, the dimethylated protein is the major form.

Its subcellular location is the cytoplasm. It localises to the nucleus. It catalyses the reaction L-arginyl-[protein] + 2 S-adenosyl-L-methionine = N(omega),N(omega)-dimethyl-L-arginyl-[protein] + 2 S-adenosyl-L-homocysteine + 2 H(+). Its function is as follows. Methylates (mono- and asymmetric dimethylation) the guanidino nitrogens of arginyl residues in proteins. May methylate histone H3 at 'Arg-17' and activate transcription via chromatin remodeling. This is Histone-arginine methyltransferase CARMER (Art4) from Drosophila grimshawi (Hawaiian fruit fly).